Here is a 245-residue protein sequence, read N- to C-terminus: MIKLVLIRHGQSLWNLENRFTGWTDVDLSENGLSEAREAGAILKKNGYTFDMAYTSVLKRAIRTLWIVLHEMDLTWVPIHKSWKLNERHYGALQGLNKDETAQKYGEEQVHIWRRSVDVRPPALTEDDPRYEATDPRYKTLKKGEFPLTECLEDTEKRVLAYWHSEIAPTLKSGNKVIISSHGNTIRSLVKYLDNLSSDGVVSLNIPTSIPLVYELDENLRPIRHYYLSMDGEVPEGEIPKHISF.

Substrate-binding positions include 8–15, 21–22, arginine 60, 87–90, lysine 98, 114–115, and 183–184; these read RHGQSLWN, TG, ERHY, RR, and GN. Catalysis depends on histidine 9, which acts as the Tele-phosphohistidine intermediate. The active-site Proton donor/acceptor is the glutamate 87.

It belongs to the phosphoglycerate mutase family. BPG-dependent PGAM subfamily.

It carries out the reaction (2R)-2-phosphoglycerate = (2R)-3-phosphoglycerate. It functions in the pathway carbohydrate degradation; glycolysis; pyruvate from D-glyceraldehyde 3-phosphate: step 3/5. Catalyzes the interconversion of 2-phosphoglycerate and 3-phosphoglycerate. This chain is 2,3-bisphosphoglycerate-dependent phosphoglycerate mutase, found in Bacillus cereus (strain B4264).